A 115-amino-acid polypeptide reads, in one-letter code: Gonadotropin subunit beta-2 (115 aa).

Cystine bridges form between cysteine 6/cysteine 54, cysteine 20/cysteine 69, cysteine 23/cysteine 107, cysteine 31/cysteine 85, cysteine 35/cysteine 87, and cysteine 90/cysteine 97. Asparagine 10 carries an N-linked (GlcNAc...) asparagine glycan.

Belongs to the glycoprotein hormones subunit beta family. In terms of assembly, heterodimer of an alpha and a beta chain.

It localises to the secreted. Involved in gametogenesis and steroidogenesis. This is Gonadotropin subunit beta-2 (cgbb) from Thunnus obesus (Bigeye tuna).